The primary structure comprises 856 residues: Protein phosphatase 2C 32 (856 aa).

A phosphoserine mark is found at serine 152, serine 189, and serine 201. Residues 269 to 835 (ESCLESNRNL…DDVSVMVVSL (567 aa)) form the PPM-type phosphatase domain. Mn(2+)-binding residues include aspartate 307 and glycine 308. Disordered stretches follow at residues 340–373 (PSEDNQLQPDQEPPTEENMCDPESISEQHSKSVV), 388–407 (GNTDTQIADGPPGDSAGPGK), and 446–485 (NPSTSGGGAGNDPCTTDRSALDGIPNSGQRHGTKKSQISS). Positions 395–407 (ADGPPGDSAGPGK) are enriched in low complexity. Residues 471–485 (NSGQRHGTKKSQISS) are compositionally biased toward polar residues. Mn(2+) contacts are provided by aspartate 763 and aspartate 826.

This sequence belongs to the PP2C family. It depends on Mg(2+) as a cofactor. Requires Mn(2+) as cofactor. Expressed in roots, leaves, stems, inflorescences, flowers and throughout the shoot meristem.

It localises to the nucleus. The enzyme catalyses O-phospho-L-seryl-[protein] + H2O = L-seryl-[protein] + phosphate. It catalyses the reaction O-phospho-L-threonyl-[protein] + H2O = L-threonyl-[protein] + phosphate. Insensitive to okadaic acid. Its function is as follows. Involved in the regulation of pedicel length and of CLAVATA pathways controlling stem cell identity at shoot and flower meristems. The protein is Protein phosphatase 2C 32 (POL) of Arabidopsis thaliana (Mouse-ear cress).